Reading from the N-terminus, the 444-residue chain is 4-O-dimethylallyl-L-tyrosine synthase (444 aa).

Belongs to the tryptophan dimethylallyltransferase family. In terms of assembly, homodimer.

It catalyses the reaction L-tyrosine + dimethylallyl diphosphate = 4-O-dimethylallyl-L-tyrosine + diphosphate. 4-O-dimethylallyl-L-tyrosine synthase; part of the gene cluster that mediates the biosynthesis of an unusual class of epipolythiodioxopiperazines (ETPs) lacking the reactive thiol group important for toxicity. Firstly, L-tyrosine is prenylated by tcpD, before undergoing condensation with L-glycine in a reaction catalyzed by the NRPS tcpP leading to the diketopiperazine (DKP) backbone. Afterwards the alpha-carbon of tyrosine is oxidized by the cytochrome P450 tcpC to form a hydroxyl group. However, in contrast other ETP biosynthesis pathways studied so far, tcpC is not able to bishydroxylate the DKP at both alpha-carbon positions, but hydroxylates the alpha-carbon of the tyrosine part and the nitrogen of the glycine part. The next steps involve an alpha,beta-elimination reaction catalyzed by tcpI, a methylation by the methyltransferase tcpN the action of the four enzyme cascade tcpG/K/J/I. Due to a dysfunctional cytochrome P450 monooxygenase tcpC, the pathway leads to the biosynthesis of probable non-toxic metabolites lacking the reactive thiol group. This chain is 4-O-dimethylallyl-L-tyrosine synthase, found in Claviceps purpurea (strain 20.1) (Ergot fungus).